Here is a 376-residue protein sequence, read N- to C-terminus: tRNA-specific 2-thiouridylase MnmA (376 aa).

Residues 9-16 and M35 contribute to the ATP site; that span reads AMSGGIDS. The active-site Nucleophile is C105. A disulfide bridge links C105 with C202. G129 provides a ligand contact to ATP. Residues 151–153 are interaction with tRNA; the sequence is KDQ. The Cysteine persulfide intermediate role is filled by C202. An interaction with tRNA region spans residues 312-313; it reads RY.

It belongs to the MnmA/TRMU family.

It localises to the cytoplasm. The enzyme catalyses S-sulfanyl-L-cysteinyl-[protein] + uridine(34) in tRNA + AH2 + ATP = 2-thiouridine(34) in tRNA + L-cysteinyl-[protein] + A + AMP + diphosphate + H(+). Its function is as follows. Catalyzes the 2-thiolation of uridine at the wobble position (U34) of tRNA, leading to the formation of s(2)U34. The protein is tRNA-specific 2-thiouridylase MnmA of Amoebophilus asiaticus (strain 5a2).